We begin with the raw amino-acid sequence, 1041 residues long: Probable rhamnogalacturonate lyase C (1041 aa).

The signal sequence occupies residues 1–21 (MFASTLRKTFVFLGLATYSAA). Residues Asn-28, Asn-94, Asn-116, Asn-142, Asn-231, Asn-283, Asn-528, and Asn-634 are each glycosylated (N-linked (GlcNAc...) asparagine). The segment at 703 to 728 (ISRPCPRKGGTRRRKKERKKEGKKQG) is disordered. A compositionally biased stretch (basic residues) spans 707–720 (CPRKGGTRRRKKER). An N-linked (GlcNAc...) asparagine glycan is attached at Asn-864.

This sequence belongs to the polysaccharide lyase 4 family.

It localises to the secreted. It carries out the reaction Endotype eliminative cleavage of L-alpha-rhamnopyranosyl-(1-&gt;4)-alpha-D-galactopyranosyluronic acid bonds of rhamnogalacturonan I domains in ramified hairy regions of pectin leaving L-rhamnopyranose at the reducing end and 4-deoxy-4,5-unsaturated D-galactopyranosyluronic acid at the non-reducing end.. Functionally, pectinolytic enzymes consist of four classes of enzymes: pectin lyase, polygalacturonase, pectin methylesterase and rhamnogalacturonase. Degrades the rhamnogalacturonan I (RG-I) backbone of pectin. The protein is Probable rhamnogalacturonate lyase C (rglC) of Emericella nidulans (strain FGSC A4 / ATCC 38163 / CBS 112.46 / NRRL 194 / M139) (Aspergillus nidulans).